Consider the following 491-residue polypeptide: UDP-N-acetylmuramate--L-alanine ligase (491 aa).

126 to 132 (GTHGKTT) contacts ATP.

Belongs to the MurCDEF family.

Its subcellular location is the cytoplasm. It carries out the reaction UDP-N-acetyl-alpha-D-muramate + L-alanine + ATP = UDP-N-acetyl-alpha-D-muramoyl-L-alanine + ADP + phosphate + H(+). Its pathway is cell wall biogenesis; peptidoglycan biosynthesis. Its function is as follows. Cell wall formation. This Shigella dysenteriae serotype 1 (strain Sd197) protein is UDP-N-acetylmuramate--L-alanine ligase.